We begin with the raw amino-acid sequence, 358 residues long: Serine/threonine-protein phosphatase 2A activator 2 (358 aa).

Belongs to the PTPA-type PPIase family.

It is found in the cytoplasm. It catalyses the reaction [protein]-peptidylproline (omega=180) = [protein]-peptidylproline (omega=0). PPIases accelerate the folding of proteins. It catalyzes the cis-trans isomerization of proline imidic peptide bonds in oligopeptides. Acts as a regulatory subunit for PP2A-like phosphatases modulating their activity or substrate specificity, probably by inducing a conformational change in the catalytic subunit, a direct target of the PPIase. Can reactivate inactive phosphatase PP2A-phosphatase methylesterase complexes (PP2Ai) in presence of ATP and Mg(2+) by dissociating the inactive form from the complex. In Candida glabrata (strain ATCC 2001 / BCRC 20586 / JCM 3761 / NBRC 0622 / NRRL Y-65 / CBS 138) (Yeast), this protein is Serine/threonine-protein phosphatase 2A activator 2 (RRD2).